The primary structure comprises 103 residues: uncharacterized protein (103 aa).

Residues 69-103 form a disordered region; sequence SSISYPGGGGGGGGSAKSLSSSKPGGGGGSPLIFL. Gly residues-rich tracts occupy residues 74-83 and 92-103; these read PGGGGGGGGS and PGGGGGSPLIFL.

This is an uncharacterized protein from Saccharomyces cerevisiae (strain ATCC 204508 / S288c) (Baker's yeast).